A 465-amino-acid chain; its full sequence is ATP-dependent protease ATPase subunit HslU (465 aa).

Residues V19 and 61 to 66 (GVGKTE) each bind ATP. Positions 153 to 175 (LFQSDGSDGDDETTEQDSHDEIR) are disordered. Residues D279, E343, and R415 each contribute to the ATP site.

It belongs to the ClpX chaperone family. HslU subfamily. In terms of assembly, a double ring-shaped homohexamer of HslV is capped on each side by a ring-shaped HslU homohexamer. The assembly of the HslU/HslV complex is dependent on binding of ATP.

Its subcellular location is the cytoplasm. Functionally, ATPase subunit of a proteasome-like degradation complex; this subunit has chaperone activity. The binding of ATP and its subsequent hydrolysis by HslU are essential for unfolding of protein substrates subsequently hydrolyzed by HslV. HslU recognizes the N-terminal part of its protein substrates and unfolds these before they are guided to HslV for hydrolysis. This chain is ATP-dependent protease ATPase subunit HslU, found in Oceanobacillus iheyensis (strain DSM 14371 / CIP 107618 / JCM 11309 / KCTC 3954 / HTE831).